We begin with the raw amino-acid sequence, 160 residues long: Ribonuclease HI (160 aa).

The 144-residue stretch at 4 to 147 (TPNSVTLYTD…CDRLAVAAYQ (144 aa)) folds into the RNase H type-1 domain. Residues Asp-13, Glu-52, Asp-74, and Asp-139 each coordinate Mg(2+).

It belongs to the RNase H family. As to quaternary structure, monomer. It depends on Mg(2+) as a cofactor.

The protein localises to the cytoplasm. The catalysed reaction is Endonucleolytic cleavage to 5'-phosphomonoester.. Endonuclease that specifically degrades the RNA of RNA-DNA hybrids. The chain is Ribonuclease HI (rnhA) from Synechocystis sp. (strain ATCC 27184 / PCC 6803 / Kazusa).